A 566-amino-acid polypeptide reads, in one-letter code: Serine/threonine-protein kinase PknE (566 aa).

At 1–337 (MDGTAESREG…PLPRSARQPW (337 aa)) the chain is on the cytoplasmic side. Serine 7 is modified (phosphoserine; by autocatalysis). Position 11 is a phosphothreonine; by autocatalysis (threonine 11). A Protein kinase domain is found at 16–275 (YRLRRLVGRG…DLSAAAHAAL (260 aa)). ATP-binding positions include 22-30 (VGRGGMGDV) and lysine 45. Phosphothreonine; by autocatalysis is present on residues threonine 50 and threonine 59. Aspartate 139 serves as the catalytic Proton acceptor. A phosphothreonine; by autocatalysis mark is found at threonine 170, threonine 175, and threonine 178. The disordered stretch occupies residues 296–330 (PVPSTHPVSPGTRWPQPTPWAGGAPPWGPPSSPLP). The helical transmembrane segment at 338–358 (LWVGVAVAVVVALAGGLGIAL) threads the bilayer. Over 359-566 (AHPWRSSGPR…DPSWLARLIG (208 aa)) the chain is Extracellular.

The protein belongs to the protein kinase superfamily. Ser/Thr protein kinase family. Post-translationally, autophosphorylated on serine and threonine residues. Dephosphorylated by PstP.

It localises to the cell membrane. The catalysed reaction is L-seryl-[protein] + ATP = O-phospho-L-seryl-[protein] + ADP + H(+). It carries out the reaction L-threonyl-[protein] + ATP = O-phospho-L-threonyl-[protein] + ADP + H(+). This chain is Serine/threonine-protein kinase PknE (pknE), found in Mycobacterium bovis (strain ATCC BAA-935 / AF2122/97).